Consider the following 460-residue polypeptide: 4-O-methyl-glucuronoyl methylesterase (460 aa).

The first 17 residues, 1–17 (MASRFFALLLLAIPIQA), serve as a signal peptide directing secretion. Residue Gln-18 is modified to Pyrrolidone carboxylic acid. Residues 18–53 (QSPVWGQCGGIGWSGPTTCVGGATCVSYNPYYSQCI) form the CBM1 domain. 3 disulfide bridges follow: Cys-96–Cys-131, Cys-277–Cys-412, and Cys-309–Cys-384. Positions 276–281 (GCSRNG) match the GXSYXG catalytic site motif motif. The active-site Nucleophile is Ser-278. Residues Lys-282, Gln-324, Glu-332, and Trp-375 each coordinate substrate. Catalysis depends on His-411, which acts as the Proton donor/acceptor. An N-linked (GlcNAc...) asparagine glycan is attached at Asn-447.

This sequence belongs to the carbohydrate esterase 15 (CE15) family.

The protein resides in the secreted. It catalyses the reaction a 4-O-methyl-alpha-D-glucuronosyl ester derivative + H2O = 4-O-methyl-alpha-D-glucuronate derivative + an alcohol + H(+). Functionally, glucuronoyl esterase which may play a significant role in biomass degradation, as it is considered to disconnect hemicellulose from lignin through the hydrolysis of the ester bond between 4-O-methyl-D-glucuronic acid residues of glucuronoxylans and aromatic alcohols of lignin. Does not hydrolyze substrates of other carbohydrate esterases such as acetylxylan esterase, acetyl esterase and feruloyl esterase. This Hypocrea jecorina (strain QM6a) (Trichoderma reesei) protein is 4-O-methyl-glucuronoyl methylesterase.